Reading from the N-terminus, the 359-residue chain is Dihydroorotate dehydrogenase (quinone) (359 aa).

Residues 61–65 and T85 contribute to the FMN site; that span reads AGYDK. Position 65 (K65) interacts with substrate. 110 to 114 contacts substrate; that stretch reads NRLGF. The FMN site is built by N139 and N170. Residue N170 coordinates substrate. S173 serves as the catalytic Nucleophile. N175 is a substrate binding site. The FMN site is built by K211 and S239. Substrate is bound at residue 240 to 241; the sequence is NT. Residues G262, G291, and 312–313 contribute to the FMN site; that span reads YT.

The protein belongs to the dihydroorotate dehydrogenase family. Type 2 subfamily. As to quaternary structure, monomer. FMN serves as cofactor.

It is found in the cell membrane. It carries out the reaction (S)-dihydroorotate + a quinone = orotate + a quinol. It participates in pyrimidine metabolism; UMP biosynthesis via de novo pathway; orotate from (S)-dihydroorotate (quinone route): step 1/1. In terms of biological role, catalyzes the conversion of dihydroorotate to orotate with quinone as electron acceptor. The chain is Dihydroorotate dehydrogenase (quinone) from Mesorhizobium japonicum (strain LMG 29417 / CECT 9101 / MAFF 303099) (Mesorhizobium loti (strain MAFF 303099)).